Here is a 363-residue protein sequence, read N- to C-terminus: Putative F-box protein At4g22170 (363 aa).

Positions 7–58 (PNSWSDLPHDLLNLVFERLSFANFNRARSVCSSWYSASRQSVPKNQIHWLIL) constitute an F-box domain.

In Arabidopsis thaliana (Mouse-ear cress), this protein is Putative F-box protein At4g22170.